Here is a 180-residue protein sequence, read N- to C-terminus: UPF0227 protein VV2369 (180 aa).

This sequence belongs to the UPF0227 family.

This Vibrio vulnificus (strain YJ016) protein is UPF0227 protein VV2369.